The primary structure comprises 263 residues: Virulence plasmid protein pGP6-D-related protein (263 aa).

This sequence belongs to the UPF0137 (pGP6-D) family.

The protein is Virulence plasmid protein pGP6-D-related protein of Chlamydia trachomatis serovar D (strain ATCC VR-885 / DSM 19411 / UW-3/Cx).